Here is a 662-residue protein sequence, read N- to C-terminus: Calcium-dependent protease (662 aa).

In terms of domain architecture, Peptidase S8 spans 196–529; the sequence is QWHLKETTIG…YGRINALKAV (334 aa). Active-site charge relay system residues include D233, H270, and S466. In terms of domain architecture, P/Homo B spans 535–662; the sequence is AQPEPVSIFT…IRSLTIELGF (128 aa).

It belongs to the peptidase S8 family.

The protein resides in the cytoplasm. Functionally, degrades phycobiliproteins in vitro. Has a substrate specificity similar to that of trypsin. This Nostoc sp. (strain PCC 7120 / SAG 25.82 / UTEX 2576) protein is Calcium-dependent protease (prcA).